The following is a 430-amino-acid chain: Adenylosuccinate synthetase (430 aa).

Residues 12–18 and 40–42 each bind GTP; these read GDEGKGK and GHT. The active-site Proton acceptor is D13. Residues D13 and G40 each coordinate Mg(2+). Residues 13-16, 38-41, T128, R142, Q223, T238, and R302 contribute to the IMP site; these read DEGK and NAGH. H41 acts as the Proton donor in catalysis. 298 to 304 contacts substrate; sequence TTTGRPR. GTP contacts are provided by residues R304, 330-332, and 412-414; these read SID and SVG.

This sequence belongs to the adenylosuccinate synthetase family. Homodimer. It depends on Mg(2+) as a cofactor.

It is found in the cytoplasm. It carries out the reaction IMP + L-aspartate + GTP = N(6)-(1,2-dicarboxyethyl)-AMP + GDP + phosphate + 2 H(+). The protein operates within purine metabolism; AMP biosynthesis via de novo pathway; AMP from IMP: step 1/2. Plays an important role in the de novo pathway of purine nucleotide biosynthesis. Catalyzes the first committed step in the biosynthesis of AMP from IMP. The polypeptide is Adenylosuccinate synthetase (Streptococcus suis (strain 98HAH33)).